Here is a 269-residue protein sequence, read N- to C-terminus: Glutamate racemase (269 aa).

Residues 7-8 and 39-40 contribute to the substrate site; these read DS and YG. C70 serves as the catalytic Proton donor/acceptor. Position 71–72 (71–72) interacts with substrate; the sequence is NT. Residue C194 is the Proton donor/acceptor of the active site. 195–196 contributes to the substrate binding site; that stretch reads TH.

The protein belongs to the aspartate/glutamate racemases family.

It carries out the reaction L-glutamate = D-glutamate. It functions in the pathway cell wall biogenesis; peptidoglycan biosynthesis. Provides the (R)-glutamate required for cell wall biosynthesis. This chain is Glutamate racemase, found in Roseobacter denitrificans (strain ATCC 33942 / OCh 114) (Erythrobacter sp. (strain OCh 114)).